We begin with the raw amino-acid sequence, 280 residues long: Ribosomal RNA large subunit methyltransferase J (280 aa).

S-adenosyl-L-methionine-binding positions include His-19, His-42, Ser-100, Glu-118, 143–144, and Asp-164; that span reads DG. Catalysis depends on Asp-164, which acts as the Proton acceptor.

It belongs to the RlmJ family. In terms of assembly, monomer.

It catalyses the reaction adenosine(2030) in 23S rRNA + S-adenosyl-L-methionine = N(6)-methyladenosine(2030) in 23S rRNA + S-adenosyl-L-homocysteine + H(+). Its function is as follows. Specifically methylates the adenine in position 2030 of 23S rRNA. Nascent 23S rRNA seems to be the natural substrate. Appears to be not necessary for ribosome assembly. Required for the utilization of extracellular DNA as the sole source of carbon and energy. In Escherichia coli (strain K12), this protein is Ribosomal RNA large subunit methyltransferase J.